Consider the following 194-residue polypeptide: 23 kDa U4/U6.U5 small nuclear ribonucleoprotein component (194 aa).

Residues 80–104 (FYCDICNLTFKDTLQYIDHLNHKVH) form a C2H2-type zinc finger.

In terms of assembly, component of the U4/U6-U5 tri-snRNP complex composed of the U4, U6 and U5 snRNAs and at least PRP3, PRP4, PRP6, PRP8, PRP18, PRP31, PRP38, SNU13, SNU23, SNU66, SNU114, SPP381, SMB1, SMD1, SMD2, SMD3, SMX2, SMX3, LSM2, LSM3, LSM4, LSM5, LSM6, LSM7, LSM8, BRR2 and DIB1.

The protein resides in the nucleus. Functionally, participates in pre-mRNA splicing. Part of the U4/U5/U6 tri-snRNP complex, one of the building blocks of the spliceosome. The polypeptide is 23 kDa U4/U6.U5 small nuclear ribonucleoprotein component (SNU23) (Saccharomyces cerevisiae (strain ATCC 204508 / S288c) (Baker's yeast)).